The following is a 72-amino-acid chain: Translation initiation factor IF-1 (72 aa).

An S1-like domain is found at 1–72 (MAKEELLEFP…TKGRITYRFK (72 aa)).

This sequence belongs to the IF-1 family. Component of the 30S ribosomal translation pre-initiation complex which assembles on the 30S ribosome in the order IF-2 and IF-3, IF-1 and N-formylmethionyl-tRNA(fMet); mRNA recruitment can occur at any time during PIC assembly.

The protein resides in the cytoplasm. In terms of biological role, one of the essential components for the initiation of protein synthesis. Stabilizes the binding of IF-2 and IF-3 on the 30S subunit to which N-formylmethionyl-tRNA(fMet) subsequently binds. Helps modulate mRNA selection, yielding the 30S pre-initiation complex (PIC). Upon addition of the 50S ribosomal subunit IF-1, IF-2 and IF-3 are released leaving the mature 70S translation initiation complex. This chain is Translation initiation factor IF-1, found in Caulobacter vibrioides (strain ATCC 19089 / CIP 103742 / CB 15) (Caulobacter crescentus).